The sequence spans 136 residues: Large ribosomal subunit protein uL16 (136 aa).

This sequence belongs to the universal ribosomal protein uL16 family. As to quaternary structure, part of the 50S ribosomal subunit.

Its function is as follows. Binds 23S rRNA and is also seen to make contacts with the A and possibly P site tRNAs. The polypeptide is Large ribosomal subunit protein uL16 (Rickettsia africae (strain ESF-5)).